The chain runs to 485 residues: Probable trichothecene esterase SAT6 (485 aa).

The interval 1–23 (MPQDPNTTLQMSSSKPSLSDLSV) is disordered. The span at 9–23 (LQMSSSKPSLSDLSV) shows a compositional bias: low complexity. Catalysis depends on charge relay system residues serine 262, aspartate 406, and histidine 438.

This sequence belongs to the AB hydrolase superfamily. Lipase family.

Its pathway is mycotoxin biosynthesis. Probable trichothecene esterase; part of the satratoxin SC1 cluster involved in the biosynthesis of satratoxins, trichothecene mycotoxins that are associated with human food poisonings. Satratoxins are suggested to be made by products of multiple gene clusters (SC1, SC2 and SC3) that encode 21 proteins in all, including polyketide synthases, acetyltransferases, and other enzymes expected to modify the trichothecene skeleton. SC1 encodes 10 proteins, SAT1 to SAT10. The largest are SAT8, which encodes a putative polyketide synthase (PKS) with a conventional non-reducing architecture, and SAT10, a putative protein containing four ankyrin repeats and thus may be involved in protein scaffolding. The putative short-chain reductase SAT3 may assist the PKS in some capacity. SAT6 contains a secretory lipase domain and acts probably as a trichothecene esterase. SAT5 encodes a putative acetyltransferase, and so, with SAT6, may affect endogenous protection from toxicity. The probable transcription factor SAT9 may regulate the expression of the SC1 cluster. SC2 encodes proteins SAT11 to SAT16, the largest of which encodes the putative reducing PKS SAT13. SAT11 is a cytochrome P450 monooxygenase, while SAT14 and SAT16 are probable acetyltransferases. The SC2 cluster may be regulated by the transcription factor SAT15. SC3 is a small cluster that encodes 5 proteins, SAT17 to SAT21. SAT21 is a putative MFS-type transporter which may have a role in exporting secondary metabolites. The four other proteins putatively encoded in SC3 include the taurine hydroxylase-like protein SAT17, the O-methyltransferase SAT18, the acetyltransferase SAT19, and the Cys6-type zinc finger SAT20, the latter being probably involved in regulation of SC3 expression. This chain is Probable trichothecene esterase SAT6, found in Stachybotrys chartarum (strain CBS 109288 / IBT 7711) (Toxic black mold).